Consider the following 574-residue polypeptide: C6 finger transcription factor poxB (574 aa).

The zn(2)-C6 fungal-type DNA-binding region spans 19 to 51; the sequence is CDRCRGQKLRCERPVSNSSTTPCRRCLKAHVRC. Disordered regions lie at residues 111 to 133, 242 to 262, and 376 to 404; these read PRRLSHSSSMANPVDSRPPGRTR, SSLQSSRGLNGFETPQRESRH, and LNQTGSHAPSSPLGGNPLPPLSGPLSASA.

It localises to the nucleus. In terms of biological role, transcription factor that positively regulates the expression of the gene cluster that mediates the biosynthesis of oxaleimides, cytotoxic compounds containing an unusual disubstituted succinimide moiety. In Penicillium oxalicum, this protein is C6 finger transcription factor poxB.